The following is a 96-amino-acid chain: MIDAAQLDHLAQLARLHLKPEEREAMTADLNSILGYFEQLREVNTDGVEEMQRPVNLVNVLRDDVPGEVFAPEVVEALAPEMHGGQIRVPRTVEAD.

The protein belongs to the GatC family. In terms of assembly, heterotrimer of A, B and C subunits.

The catalysed reaction is L-glutamyl-tRNA(Gln) + L-glutamine + ATP + H2O = L-glutaminyl-tRNA(Gln) + L-glutamate + ADP + phosphate + H(+). It catalyses the reaction L-aspartyl-tRNA(Asn) + L-glutamine + ATP + H2O = L-asparaginyl-tRNA(Asn) + L-glutamate + ADP + phosphate + 2 H(+). In terms of biological role, allows the formation of correctly charged Asn-tRNA(Asn) or Gln-tRNA(Gln) through the transamidation of misacylated Asp-tRNA(Asn) or Glu-tRNA(Gln) in organisms which lack either or both of asparaginyl-tRNA or glutaminyl-tRNA synthetases. The reaction takes place in the presence of glutamine and ATP through an activated phospho-Asp-tRNA(Asn) or phospho-Glu-tRNA(Gln). The sequence is that of Aspartyl/glutamyl-tRNA(Asn/Gln) amidotransferase subunit C from Deinococcus deserti (strain DSM 17065 / CIP 109153 / LMG 22923 / VCD115).